The sequence spans 72 residues: Conotoxin LiC53 (72 aa).

A signal peptide spans 1–23 (MEKLTSLLLVAALLMLTQTLIQG). A propeptide spanning residues 24–41 (GGEDRPNKKFLQKIKSTA) is cleaved from the precursor. Disulfide bonds link Cys-45-Cys-59, Cys-52-Cys-63, and Cys-58-Cys-68.

It belongs to the conotoxin O2 superfamily. As to expression, expressed by the venom duct.

It is found in the secreted. The sequence is that of Conotoxin LiC53 from Conus lividus (Livid cone).